Consider the following 1259-residue polypeptide: Telomerase reverse transcriptase (1259 aa).

Positions 742–1067 (RGEPRKAVRH…SFMPWSGLLI (326 aa)) constitute a Reverse transcriptase domain. Asp837, Asp999, and Asp1000 together coordinate Mg(2+).

Belongs to the reverse transcriptase family. Telomerase subfamily. Component of the telomerase ribonucleoprotein complex. In terms of tissue distribution, expressed in shoot apices and immature embryos.

It localises to the nucleus. It is found in the chromosome. Its subcellular location is the telomere. It catalyses the reaction DNA(n) + a 2'-deoxyribonucleoside 5'-triphosphate = DNA(n+1) + diphosphate. Functionally, telomerase is a ribonucleoprotein enzyme essential for the replication of chromosome termini in most eukaryotes. It elongates telomeres. It is a reverse transcriptase that adds simple sequence repeats to chromosome ends by copying a template sequence within the RNA component of the enzyme. This is Telomerase reverse transcriptase (TERT) from Oryza sativa subsp. japonica (Rice).